The sequence spans 506 residues: Histidine ammonia-lyase (506 aa).

A cross-link (5-imidazolinone (Ala-Gly)) is located at residues 143 to 145; sequence ASG. Serine 144 is modified (2,3-didehydroalanine (Ser)).

It belongs to the PAL/histidase family. Contains an active site 4-methylidene-imidazol-5-one (MIO), which is formed autocatalytically by cyclization and dehydration of residues Ala-Ser-Gly.

The protein resides in the cytoplasm. It catalyses the reaction L-histidine = trans-urocanate + NH4(+). Its pathway is amino-acid degradation; L-histidine degradation into L-glutamate; N-formimidoyl-L-glutamate from L-histidine: step 1/3. The sequence is that of Histidine ammonia-lyase from Salmonella paratyphi C (strain RKS4594).